The sequence spans 814 residues: Phenylalanine--tRNA ligase beta subunit (814 aa).

The region spanning 39–153 (SARAKGVVVG…ELPALGAPVA (115 aa)) is the tRNA-binding domain. The region spanning 414–498 (ADASSVLLRR…RLVGFDRFGA (85 aa)) is the B5 domain. Positions 476, 482, 485, and 486 each coordinate Mg(2+). An FDX-ACB domain is found at 720-813 (PTVPASERDL…LVKQHGAELR (94 aa)).

This sequence belongs to the phenylalanyl-tRNA synthetase beta subunit family. Type 1 subfamily. Tetramer of two alpha and two beta subunits. The cofactor is Mg(2+).

It localises to the cytoplasm. It carries out the reaction tRNA(Phe) + L-phenylalanine + ATP = L-phenylalanyl-tRNA(Phe) + AMP + diphosphate + H(+). The protein is Phenylalanine--tRNA ligase beta subunit of Parasynechococcus marenigrum (strain WH8102).